We begin with the raw amino-acid sequence, 113 residues long: Putative hemolysin E-like protein (113 aa).

Belongs to the hemolysin E family.

This is Putative hemolysin E-like protein from Shigella flexneri.